Reading from the N-terminus, the 296-residue chain is Uricase (296 aa).

Catalysis depends on charge relay system residues K14 and T61. Positions 61, 62, 163, 180, 229, 230, and 256 each coordinate urate. The Charge relay system role is filled by H258.

The protein belongs to the uricase family.

It localises to the peroxisome. It is found in the cytoplasm. The protein resides in the nucleus. It carries out the reaction urate + O2 + H2O = 5-hydroxyisourate + H2O2. Its pathway is purine metabolism; urate degradation; (S)-allantoin from urate: step 1/3. Catalyzes the oxidation of uric acid to 5-hydroxyisourate, which is further processed to form (S)-allantoin. The chain is Uricase from Schizosaccharomyces pombe (strain 972 / ATCC 24843) (Fission yeast).